Here is a 61-residue protein sequence, read N- to C-terminus: MRPPTQPLTQALPFSLRDALRGTGLQVPVIKMGTGWEGMYRTLKEVAYILLCCWCIKELLD.

This chain is Lens epithelial cell protein LEP503 (Lenep), found in Mus musculus (Mouse).